The following is a 499-amino-acid chain: Glutamyl-tRNA(Gln) amidotransferase subunit A (499 aa).

Residues lysine 76 and serine 151 each act as charge relay system in the active site. Residue serine 175 is the Acyl-ester intermediate of the active site.

The protein belongs to the amidase family. GatA subfamily. As to quaternary structure, heterotrimer of A, B and C subunits.

The enzyme catalyses L-glutamyl-tRNA(Gln) + L-glutamine + ATP + H2O = L-glutaminyl-tRNA(Gln) + L-glutamate + ADP + phosphate + H(+). Allows the formation of correctly charged Gln-tRNA(Gln) through the transamidation of misacylated Glu-tRNA(Gln) in organisms which lack glutaminyl-tRNA synthetase. The reaction takes place in the presence of glutamine and ATP through an activated gamma-phospho-Glu-tRNA(Gln). This chain is Glutamyl-tRNA(Gln) amidotransferase subunit A, found in Rhodopirellula baltica (strain DSM 10527 / NCIMB 13988 / SH1).